A 623-amino-acid chain; its full sequence is Vacuolar-sorting receptor 1 (623 aa).

An N-terminal signal peptide occupies residues 1-22 (MKCWRLSAILFLGFMLTSLSTA). Topologically, residues 23–564 (RFVVEKNSLS…SKTASQAKST (542 aa)) are lumenal. The PA domain occupies 54-163 (QYGGSMAGNV…SFGEKLKDAI (110 aa)). Asn143 is a glycosylation site (N-linked (GlcNAc...) asparagine). EGF-like domains lie at 411-461 (ETNE…TTCE) and 464-511 (GHGR…KNCE). Disulfide bonds link Cys415–Cys433, Cys422–Cys442, Cys444–Cys460, Cys468–Cys488, Cys475–Cys496, and Cys498–Cys510. Residues 512–554 (DIDECKDKKACQCPECSCKNTWGSYNCSCSGDLLYIKDQDTCI) form the EGF-like 3; calcium-binding domain. Asn537 is a glycosylation site (N-linked (GlcNAc...) asparagine). Cysteines 540 and 553 form a disulfide. The helical transmembrane segment at 565–585 (WAAFWVVLIALAMIAGGGFLV) threads the bilayer. Residues 586-623 (YKYRIRQYMDSEIRAIMAQYMPLDSQEEGPNHVNHQRG) are Cytoplasmic-facing. A Tyrosine-based internalization motif motif is present at residues 605–608 (YMPL).

Belongs to the VSR (BP-80) family. Interacts with the N-terminal propeptide of aleurein (proaleurein).

It is found in the membrane. The protein resides in the golgi apparatus membrane. It localises to the cytoplasmic vesicle. Its subcellular location is the clathrin-coated vesicle membrane. The protein localises to the prevacuolar compartment membrane. In terms of biological role, vacuolar-sorting receptor (VSR) involved in clathrin-coated vesicles sorting from Golgi apparatus to vacuoles. Seems to binds preferentially proteins containing a N-terminal NPIR motif. In Pisum sativum (Garden pea), this protein is Vacuolar-sorting receptor 1 (BP80).